Here is a 252-residue protein sequence, read N- to C-terminus: 5'-nucleotidase SurE (252 aa).

Aspartate 8, aspartate 9, serine 39, and asparagine 91 together coordinate a divalent metal cation.

This sequence belongs to the SurE nucleotidase family. It depends on a divalent metal cation as a cofactor.

The protein resides in the cytoplasm. The enzyme catalyses a ribonucleoside 5'-phosphate + H2O = a ribonucleoside + phosphate. Its function is as follows. Nucleotidase that shows phosphatase activity on nucleoside 5'-monophosphates. The protein is 5'-nucleotidase SurE of Bordetella avium (strain 197N).